The following is a 471-amino-acid chain: Ammonium transporter Rh type B (471 aa).

Topologically, residues 1 to 13 are cytoplasmic; sequence MAGSPSRAAGRRL. The helical transmembrane segment at 14 to 33 threads the bilayer; sequence QLPLLSFLQGATAVLFAVFV. The Extracellular portion of the chain corresponds to 34 to 60; that stretch reads RYNHKTDAALWHRGNHSNADNEFYFRY. N48 carries N-linked (GlcNAc...) asparagine glycosylation. A helical membrane pass occupies residues 61-81; it reads PSFQDVHAMVFVGFGFLMVFL. Residues 82–85 lie on the Cytoplasmic side of the membrane; it reads QRYG. The chain crosses the membrane as a helical span at residues 86-106; that stretch reads FSSVGFTFLLAAFALQWSTLV. Residues 107–123 lie on the Extracellular side of the membrane; that stretch reads QGFLHSFHGGHIHVGVE. A helical membrane pass occupies residues 124–144; it reads SMINADFCAGAVLISFGAVLG. Topologically, residues 145–148 are cytoplasmic; it reads KTGP. The chain crosses the membrane as a helical span at residues 149–169; that stretch reads AQLLLMALLEVVLFGINEFVL. The Extracellular portion of the chain corresponds to 170–177; the sequence is LHLLGVRD. The chain crosses the membrane as a helical span at residues 178–200; the sequence is AGGSMTIHTFGAYFGLVLSQVLY. At 201–217 the chain is on the cytoplasmic side; the sequence is RPQLEKSKHRQGLYHSD. A helical transmembrane segment spans residues 218–238; sequence LFAMIGTIFLWIFWPSFNAAL. At 239–249 the chain is on the extracellular side; that stretch reads TSLGAGQHRTA. A helical membrane pass occupies residues 250-270; it reads LNTYYSLAASTLGTFALSALV. Residues 271-280 lie on the Cytoplasmic side of the membrane; that stretch reads GEDGRLDMVH. Residues 281–301 form a helical membrane-spanning segment; that stretch reads IQNAALAGRVVVGTSSEMMLT. A topological domain (extracellular) is located at residue P302. Residues 303-323 traverse the membrane as a helical segment; sequence FGALAAGFLAGTVSTLGYKFF. At 324–344 the chain is on the cytoplasmic side; the sequence is TPILESKFKVQDTCGVHNLHG. Residues 345–365 traverse the membrane as a helical segment; it reads MPGVLGVLLGVLVAGLATHEA. Residues 366-391 are Extracellular-facing; that stretch reads YGDGLESVFPLIAEGQRSATSQAMYQ. The chain crosses the membrane as a helical span at residues 392 to 412; the sequence is LFGLFVTLMFASVGGGLGGLL. Residues 413–471 are Cytoplasmic-facing; it reads LKLPFLDSPPDSQCYEDQVHWQAPGATLSPLPTPAFQVPGEHEDKAQRPLRVEEADTQA. Residues 414–422 are interaction with ANK3; the sequence is KLPFLDSPP. Positions 427–430 match the Basolateral sorting signal motif; sequence YEDQ. The disordered stretch occupies residues 437–471; the sequence is GATLSPLPTPAFQVPGEHEDKAQRPLRVEEADTQA. Positions 452-471 are enriched in basic and acidic residues; sequence GEHEDKAQRPLRVEEADTQA.

This sequence belongs to the ammonium transporter (TC 2.A.49) family. Rh subfamily. As to quaternary structure, interacts (via C-terminus) with ANK2 and ANK3; required for targeting to the basolateral membrane. Post-translationally, N-glycosylated.

Its subcellular location is the cell membrane. The protein resides in the basolateral cell membrane. It catalyses the reaction NH4(+)(in) = NH4(+)(out). It carries out the reaction methylamine(out) = methylamine(in). The catalysed reaction is CO2(out) = CO2(in). Functionally, ammonium transporter involved in the maintenance of acid-base homeostasis. Transports ammonium and its related derivative methylammonium across the basolateral plasma membrane of epithelial cells likely contributing to renal transepithelial ammonia transport and ammonia metabolism. May transport either NH4(+) or NH3 ammonia species predominantly mediating an electrogenic NH4(+) transport. May act as a CO2 channel providing for renal acid secretion. This chain is Ammonium transporter Rh type B (RHBG), found in Pongo pygmaeus (Bornean orangutan).